A 92-amino-acid polypeptide reads, in one-letter code: N(2)-fixation sustaining protein CowN (92 aa).

It belongs to the CowN family.

Functionally, is required to sustain N(2)-dependent growth in the presence of low levels of carbon monoxide (CO). Probably acts by protecting the N(2) fixation ability of the nitrogenase complex, which is inactivated in the presence of CO. The sequence is that of N(2)-fixation sustaining protein CowN from Rhodopseudomonas palustris (strain HaA2).